The primary structure comprises 164 residues: uncharacterized protein (164 aa).

The BFN domain occupies 1-129 (MGEVRVVGIR…AVLAQAGLLI (129 aa)).

This is an uncharacterized protein from Mycobacterium tuberculosis (strain CDC 1551 / Oshkosh).